A 418-amino-acid chain; its full sequence is uncharacterized protein (418 aa).

The segment at 1–24 (MSGTAGFITVSPGPPTEAPGGFPR) is disordered.

This sequence to A.pernix APE_1276 and S.solfataricus SSO2105.

This is an uncharacterized protein from Aeropyrum pernix (strain ATCC 700893 / DSM 11879 / JCM 9820 / NBRC 100138 / K1).